A 222-amino-acid chain; its full sequence is ATP-dependent dethiobiotin synthetase BioD (222 aa).

Asp-12 to Ile-17 contacts ATP. Thr-16 contributes to the Mg(2+) binding site. Lys-37 is an active-site residue. Position 41 (Thr-41) interacts with substrate. ATP is bound by residues Asp-49, Glu-107–Gly-110, Gly-167–Ser-168, and Ala-197–Gly-199. The Mg(2+) site is built by Asp-49 and Glu-107.

The protein belongs to the dethiobiotin synthetase family. In terms of assembly, homodimer. Mg(2+) is required as a cofactor.

Its subcellular location is the cytoplasm. It carries out the reaction (7R,8S)-7,8-diammoniononanoate + CO2 + ATP = (4R,5S)-dethiobiotin + ADP + phosphate + 3 H(+). Its pathway is cofactor biosynthesis; biotin biosynthesis; biotin from 7,8-diaminononanoate: step 1/2. Catalyzes a mechanistically unusual reaction, the ATP-dependent insertion of CO2 between the N7 and N8 nitrogen atoms of 7,8-diaminopelargonic acid (DAPA, also called 7,8-diammoniononanoate) to form a ureido ring. The protein is ATP-dependent dethiobiotin synthetase BioD of Corynebacterium diphtheriae (strain ATCC 700971 / NCTC 13129 / Biotype gravis).